A 641-amino-acid chain; its full sequence is Phosphomethylpyrimidine synthase (641 aa).

Over residues 1 to 12 (MTDTSTQNTATP) the composition is skewed to polar residues. Residues 1–25 (MTDTSTQNTATPTDEYGAEIHPKHS) are disordered. Residues N200, M229, Y258, H294, 314–316 (SRG), 355–358 (DGLR), and E394 each bind substrate. Zn(2+) is bound at residue H398. Y421 provides a ligand contact to substrate. Position 462 (H462) interacts with Zn(2+). Residues C542, C545, and C550 each coordinate [4Fe-4S] cluster.

It belongs to the ThiC family. The cofactor is [4Fe-4S] cluster.

The catalysed reaction is 5-amino-1-(5-phospho-beta-D-ribosyl)imidazole + S-adenosyl-L-methionine = 4-amino-2-methyl-5-(phosphooxymethyl)pyrimidine + CO + 5'-deoxyadenosine + formate + L-methionine + 3 H(+). It functions in the pathway cofactor biosynthesis; thiamine diphosphate biosynthesis. Functionally, catalyzes the synthesis of the hydroxymethylpyrimidine phosphate (HMP-P) moiety of thiamine from aminoimidazole ribotide (AIR) in a radical S-adenosyl-L-methionine (SAM)-dependent reaction. This is Phosphomethylpyrimidine synthase from Corynebacterium jeikeium (strain K411).